Consider the following 226-residue polypeptide: MTIILTNDDGIDAPGIKALAQAVSGKNFIVAAPRDHQSGCGHQVTTTRPINLQRRSDSEYAIAGTPADCIRIAITQISQDVKFVLSGINAGGNLGVDAYISGTVAAVREAAMHGIAGVAISHYRKAKQNFDWELAAKWTAEVLEELLHRPLEPGYFWNVNLPHLQPGETQPELVFCQPCTKPLPANYRIDGDDFYYVGEYGKRERTPGSDVDVCFTGNIAITQLRV.

4 residues coordinate a divalent metal cation: Asp8, Asp9, Ser38, and Asn89.

The protein belongs to the SurE nucleotidase family. Requires a divalent metal cation as cofactor.

It is found in the cytoplasm. The catalysed reaction is a ribonucleoside 5'-phosphate + H2O = a ribonucleoside + phosphate. Functionally, nucleotidase that shows phosphatase activity on nucleoside 5'-monophosphates. The sequence is that of Putative 5'-nucleotidase alr3139 from Nostoc sp. (strain PCC 7120 / SAG 25.82 / UTEX 2576).